The chain runs to 356 residues: Tyrosine recombinase XerS (356 aa).

The Core-binding (CB) domain occupies Leu16 to Thr121. Residues Glu169–Asp354 form the Tyr recombinase domain. Catalysis depends on residues Arg210, Lys234, His306, Arg309, and His332. The O-(3'-phospho-DNA)-tyrosine intermediate role is filled by Tyr341.

This sequence belongs to the 'phage' integrase family. XerS subfamily.

Its subcellular location is the cytoplasm. FtsK is required for recombination. In terms of biological role, site-specific tyrosine recombinase, which acts by catalyzing the cutting and rejoining of the recombining DNA molecules. Essential to convert dimers of the bacterial chromosome into monomers to permit their segregation at cell division. The chain is Tyrosine recombinase XerS from Streptococcus mutans serotype c (strain ATCC 700610 / UA159).